A 289-amino-acid polypeptide reads, in one-letter code: LBH domain-containing protein 1 (289 aa).

Disordered regions lie at residues 1–36 and 205–289; these read MALV…PLWD and EGAE…ASQD. The LBH domain maps to 1–128; that stretch reads MALVPGRSKE…AEAFFQDQSE (128 aa). Residues 15–25 show a composition bias toward polar residues; the sequence is TRNSPGSSQHP.

Expressed in bladder cancer tissues (at protein level).

The protein is LBH domain-containing protein 1 of Homo sapiens (Human).